Here is a 267-residue protein sequence, read N- to C-terminus: Hydroxyethylthiazole kinase (267 aa).

Met48 lines the substrate pocket. 2 residues coordinate ATP: Arg124 and Ser170. Position 197 (Gly197) interacts with substrate.

This sequence belongs to the Thz kinase family. The cofactor is Mg(2+).

The enzyme catalyses 5-(2-hydroxyethyl)-4-methylthiazole + ATP = 4-methyl-5-(2-phosphooxyethyl)-thiazole + ADP + H(+). It functions in the pathway cofactor biosynthesis; thiamine diphosphate biosynthesis; 4-methyl-5-(2-phosphoethyl)-thiazole from 5-(2-hydroxyethyl)-4-methylthiazole: step 1/1. Functionally, catalyzes the phosphorylation of the hydroxyl group of 4-methyl-5-beta-hydroxyethylthiazole (THZ). The protein is Hydroxyethylthiazole kinase of Leptospira biflexa serovar Patoc (strain Patoc 1 / Ames).